A 599-amino-acid chain; its full sequence is Aspartate--tRNA(Asp/Asn) ligase (599 aa).

Glutamate 173 lines the L-aspartate pocket. Residues glutamine 197–lysine 200 form an aspartate region. Arginine 219 provides a ligand contact to L-aspartate. Residues arginine 219 to glutamate 221 and glutamine 228 each bind ATP. Histidine 451 provides a ligand contact to L-aspartate. Glutamate 484 contributes to the ATP binding site. An L-aspartate-binding site is contributed by arginine 491. Glycine 536–arginine 539 is an ATP binding site.

It belongs to the class-II aminoacyl-tRNA synthetase family. Type 1 subfamily. As to quaternary structure, homodimer.

It is found in the cytoplasm. It carries out the reaction tRNA(Asx) + L-aspartate + ATP = L-aspartyl-tRNA(Asx) + AMP + diphosphate. Functionally, aspartyl-tRNA synthetase with relaxed tRNA specificity since it is able to aspartylate not only its cognate tRNA(Asp) but also tRNA(Asn). Reaction proceeds in two steps: L-aspartate is first activated by ATP to form Asp-AMP and then transferred to the acceptor end of tRNA(Asp/Asn). This Methylococcus capsulatus (strain ATCC 33009 / NCIMB 11132 / Bath) protein is Aspartate--tRNA(Asp/Asn) ligase.